We begin with the raw amino-acid sequence, 450 residues long: tRNA modification GTPase MnmE (450 aa).

The (6S)-5-formyl-5,6,7,8-tetrahydrofolate site is built by Arg-20, Glu-78, and Lys-117. In terms of domain architecture, TrmE-type G spans 211–372 (GLRMVIVGKP…LEESIYRETQ (162 aa)). Asn-221 serves as a coordination point for K(+). Residues 221–226 (NVGKST), 240–246 (TDIPGTT), and 265–268 (DTAG) contribute to the GTP site. Mg(2+) is bound at residue Ser-225. K(+) is bound by residues Thr-240, Ile-242, and Thr-245. Thr-246 lines the Mg(2+) pocket. Lys-450 serves as a coordination point for (6S)-5-formyl-5,6,7,8-tetrahydrofolate.

Belongs to the TRAFAC class TrmE-Era-EngA-EngB-Septin-like GTPase superfamily. TrmE GTPase family. Homodimer. Heterotetramer of two MnmE and two MnmG subunits. The cofactor is K(+).

The protein resides in the cytoplasm. Functionally, exhibits a very high intrinsic GTPase hydrolysis rate. Involved in the addition of a carboxymethylaminomethyl (cmnm) group at the wobble position (U34) of certain tRNAs, forming tRNA-cmnm(5)s(2)U34. This chain is tRNA modification GTPase MnmE, found in Thermotoga sp. (strain RQ2).